Reading from the N-terminus, the 1562-residue chain is DNA-directed RNA polymerase subunit beta'' (1562 aa).

Residues 1 to 22 (MVKKKKFKTKNIQNPPFSSQNS) form a disordered region. Residues 11-22 (NIQNPPFSSQNS) show a composition bias toward polar residues. Cys-275, Cys-338, Cys-345, and Cys-348 together coordinate Zn(2+).

This sequence belongs to the RNA polymerase beta' chain family. RpoC2 subfamily. In terms of assembly, in plastids the minimal PEP RNA polymerase catalytic core is composed of four subunits: alpha, beta, beta', and beta''. When a (nuclear-encoded) sigma factor is associated with the core the holoenzyme is formed, which can initiate transcription. It depends on Zn(2+) as a cofactor.

It is found in the plastid. Its subcellular location is the chloroplast. It carries out the reaction RNA(n) + a ribonucleoside 5'-triphosphate = RNA(n+1) + diphosphate. DNA-dependent RNA polymerase catalyzes the transcription of DNA into RNA using the four ribonucleoside triphosphates as substrates. This Chlorella vulgaris (Green alga) protein is DNA-directed RNA polymerase subunit beta''.